The following is a 581-amino-acid chain: ATP-dependent lipid A-core flippase (581 aa).

A run of 5 helical transmembrane segments spans residues 27 to 47, 63 to 83, 154 to 174, 251 to 271, and 279 to 299; these read VFLA…FPAI, MVWL…VIVY, IALI…TLAI, MTPI…FLAL, and GASA…ISPV. An ABC transmembrane type-1 domain is found at 28–311; it reads FLAVIGMVGT…LATVNPTIQR (284 aa). Positions 343–579 constitute an ABC transporter domain; it reads ICFDNVSLRY…GSYYANLSRL (237 aa). Residue 377 to 384 coordinates ATP; the sequence is GASGGGKS.

This sequence belongs to the ABC transporter superfamily. Lipid exporter (TC 3.A.1.106) family. Homodimer.

The protein localises to the cell inner membrane. The enzyme catalyses ATP + H2O + lipid A-core oligosaccharideSide 1 = ADP + phosphate + lipid A-core oligosaccharideSide 2.. Its function is as follows. Involved in lipopolysaccharide (LPS) biosynthesis. Translocates lipid A-core from the inner to the outer leaflet of the inner membrane. Transmembrane domains (TMD) form a pore in the inner membrane and the ATP-binding domain (NBD) is responsible for energy generation. The chain is ATP-dependent lipid A-core flippase from Albidiferax ferrireducens (strain ATCC BAA-621 / DSM 15236 / T118) (Rhodoferax ferrireducens).